The chain runs to 434 residues: Glutamate-1-semialdehyde 2,1-aminomutase 2 (434 aa).

At Lys270 the chain carries N6-(pyridoxal phosphate)lysine.

This sequence belongs to the class-III pyridoxal-phosphate-dependent aminotransferase family. HemL subfamily. As to quaternary structure, homodimer. It depends on pyridoxal 5'-phosphate as a cofactor.

The protein resides in the cytoplasm. The catalysed reaction is (S)-4-amino-5-oxopentanoate = 5-aminolevulinate. The protein operates within porphyrin-containing compound metabolism; protoporphyrin-IX biosynthesis; 5-aminolevulinate from L-glutamyl-tRNA(Glu): step 2/2. The sequence is that of Glutamate-1-semialdehyde 2,1-aminomutase 2 from Bacillus cereus (strain G9842).